Consider the following 404-residue polypeptide: Voltage-gated potassium channel subunit beta-3 (404 aa).

Polar residues predominate over residues 1 to 14 (MQVSIACTEQNLRS). The tract at residues 1–78 (MQVSIACTEQ…RESTGRGTGM (78 aa)) is disordered. Residues 28–50 (PGGGNGGPVGGGHGNPPGGGGLG) are compositionally biased toward gly residues. The NADP(+) site is built by T97, W98, Q104, and D126. The active-site Proton donor/acceptor is the Y131. The NADP(+) site is built by N199, S229, R230, Q255, W284, S285, P286, L287, A288, C289, K295, K305, G364, S366, Q370, and E373.

The protein belongs to the shaker potassium channel beta subunit family. In terms of assembly, forms heteromultimeric complex with alpha subunits. Interacts with KCNA5 and KCNB2. As to expression, predominantly expressed in brain. Strongest expression in olfactory bulb and thalamic nuclei. Not detected in heart, spleen, lung, liver, skeletal muscle, kidney and testis.

The protein localises to the cytoplasm. Regulatory subunit of the voltage-gated potassium (Kv) channels composed of pore-forming and potassium-conducting alpha subunits and of regulatory beta subunits. The beta-3/KCNAB3 subunit may mediate closure of potassium channels. Inactivates Kv1.4/KCNA4 alpha subunit-containing Kv channel current but not Kv1.1/KCNA1 or Kv1.5/KCNA5 channels. May display nicotinamide adenine dinucleotide phosphate (NADPH)-dependent aldoketoreductase activity. The binding of oxidized and reduced NADP(H) cofactors may be required for the regulation of potassium channel activity. The polypeptide is Voltage-gated potassium channel subunit beta-3 (Rattus norvegicus (Rat)).